Consider the following 68-residue polypeptide: uncharacterized protein (68 aa).

It to B.subtilis XtrA.

This is an uncharacterized protein from Bacillus subtilis (strain 168).